The chain runs to 242 residues: Uridylate kinase (242 aa).

An ATP-binding site is contributed by K12–G15. The segment at G20–G25 is involved in allosteric activation by GTP. G54 is a UMP binding site. The ATP site is built by G55 and R59. UMP contacts are provided by residues D74 and T135 to T142. 3 residues coordinate ATP: T162, Y168, and D171.

Belongs to the UMP kinase family. In terms of assembly, homohexamer.

The protein localises to the cytoplasm. It carries out the reaction UMP + ATP = UDP + ADP. Its pathway is pyrimidine metabolism; CTP biosynthesis via de novo pathway; UDP from UMP (UMPK route): step 1/1. Its activity is regulated as follows. Allosterically activated by GTP. Inhibited by UTP. Functionally, catalyzes the reversible phosphorylation of UMP to UDP. The sequence is that of Uridylate kinase from Pasteurella multocida (strain Pm70).